We begin with the raw amino-acid sequence, 397 residues long: Succinate--CoA ligase [ADP-forming] subunit beta (397 aa).

Residues 9-254 enclose the ATP-grasp domain; it reads KALLKSFGAP…TTEEDEKEIE (246 aa). ATP contacts are provided by residues K46, 53–55, E109, A112, and E117; that span reads GRG. The Mg(2+) site is built by N209 and D223. Substrate-binding positions include N274 and 331 to 333; that span reads GIM.

Belongs to the succinate/malate CoA ligase beta subunit family. In terms of assembly, heterotetramer of two alpha and two beta subunits. Requires Mg(2+) as cofactor.

The enzyme catalyses succinate + ATP + CoA = succinyl-CoA + ADP + phosphate. It catalyses the reaction GTP + succinate + CoA = succinyl-CoA + GDP + phosphate. It participates in carbohydrate metabolism; tricarboxylic acid cycle; succinate from succinyl-CoA (ligase route): step 1/1. Succinyl-CoA synthetase functions in the citric acid cycle (TCA), coupling the hydrolysis of succinyl-CoA to the synthesis of either ATP or GTP and thus represents the only step of substrate-level phosphorylation in the TCA. The beta subunit provides nucleotide specificity of the enzyme and binds the substrate succinate, while the binding sites for coenzyme A and phosphate are found in the alpha subunit. In Mesorhizobium japonicum (strain LMG 29417 / CECT 9101 / MAFF 303099) (Mesorhizobium loti (strain MAFF 303099)), this protein is Succinate--CoA ligase [ADP-forming] subunit beta.